A 139-amino-acid polypeptide reads, in one-letter code: Flagellar basal body rod protein FlgB (139 aa).

The protein belongs to the flagella basal body rod proteins family. In terms of assembly, the basal body constitutes a major portion of the flagellar organelle and consists of a number of rings mounted on a central rod. In Gram-negative bacteria, at least four rings, L, P, S and M are present, whereas Gram-positive bacteria lack the L and P rings. The rod consists of about 26 subunits of FlgG in the distal portion, and FlgB, FlgC and FlgF build up the proximal portion of the rod with about 6 subunits each. Rod assembly occurs by export via the flagellum-specific pathway of its constituent proteins and by their incorporation into the rod structure in the probable order of FlgB, FlgC, FlgF and FlgG. Another protein, FliE, also assembles onto the stable rod structure.

It is found in the bacterial flagellum basal body. Structural component of flagellum, the bacterial motility apparatus. Part of the rod structure of flagellar basal body. The chain is Flagellar basal body rod protein FlgB from Proteus mirabilis.